Reading from the N-terminus, the 369-residue chain is MTVFTPTILLCAGGTGGHLFPAESLAHALRARGIRVALATDARVDSIASEFPASEVVTIASATPSGRSPLKRAGAVLTLGRGFGVAAKEIRRINPAAIVGFGGYPTVPPVLAGQILRVPTILHEQNAVMGRANAFLARGARTIATGFKVVRGVPDKARAPRIHTGNPLRPAVIEAAKVPYPAFGPDDALRLLVFGGSQGARVMGEVVPEAIARLPDALRARLHLVQQVRPEDLTAVQNRYLAMGLAGIEAAPFFKDLPARMAASHLVVSRSGASTVSELAAIGRPAILVPLPGSLDQDQAANAATLDAIGAALAVKQPDFTPERLAAELTACFATPAKLTAAADAARSAGIHDAAERLAEVVVETAART.

UDP-N-acetyl-alpha-D-glucosamine is bound by residues 15–17, N126, R169, S197, and Q299; that span reads TGG.

Belongs to the glycosyltransferase 28 family. MurG subfamily.

The protein localises to the cell inner membrane. It carries out the reaction di-trans,octa-cis-undecaprenyl diphospho-N-acetyl-alpha-D-muramoyl-L-alanyl-D-glutamyl-meso-2,6-diaminopimeloyl-D-alanyl-D-alanine + UDP-N-acetyl-alpha-D-glucosamine = di-trans,octa-cis-undecaprenyl diphospho-[N-acetyl-alpha-D-glucosaminyl-(1-&gt;4)]-N-acetyl-alpha-D-muramoyl-L-alanyl-D-glutamyl-meso-2,6-diaminopimeloyl-D-alanyl-D-alanine + UDP + H(+). It participates in cell wall biogenesis; peptidoglycan biosynthesis. Functionally, cell wall formation. Catalyzes the transfer of a GlcNAc subunit on undecaprenyl-pyrophosphoryl-MurNAc-pentapeptide (lipid intermediate I) to form undecaprenyl-pyrophosphoryl-MurNAc-(pentapeptide)GlcNAc (lipid intermediate II). This is UDP-N-acetylglucosamine--N-acetylmuramyl-(pentapeptide) pyrophosphoryl-undecaprenol N-acetylglucosamine transferase from Methylobacterium radiotolerans (strain ATCC 27329 / DSM 1819 / JCM 2831 / NBRC 15690 / NCIMB 10815 / 0-1).